Reading from the N-terminus, the 195-residue chain is Probable GTP-binding protein EngB (195 aa).

Residues 22 to 195 form the EngB-type G domain; sequence GLPEIALAGR…WGAIKKMINR (174 aa). GTP-binding positions include 30–37, 57–61, 75–78, 142–145, and 174–176; these read GRSNVGKS, GKTQT, DVPG, TKAD, and FSS. Mg(2+) contacts are provided by Ser37 and Thr59.

The protein belongs to the TRAFAC class TrmE-Era-EngA-EngB-Septin-like GTPase superfamily. EngB GTPase family. Mg(2+) serves as cofactor.

Necessary for normal cell division and for the maintenance of normal septation. Its function is as follows. Binds GTP and GDP. The chain is Probable GTP-binding protein EngB from Bacillus subtilis (strain 168).